The primary structure comprises 117 residues: Ribosomal silencing factor RsfS (117 aa).

It belongs to the Iojap/RsfS family. In terms of assembly, interacts with ribosomal protein uL14 (rplN).

The protein resides in the cytoplasm. Functionally, functions as a ribosomal silencing factor. Interacts with ribosomal protein uL14 (rplN), blocking formation of intersubunit bridge B8. Prevents association of the 30S and 50S ribosomal subunits and the formation of functional ribosomes, thus repressing translation. The chain is Ribosomal silencing factor RsfS from Halalkalibacterium halodurans (strain ATCC BAA-125 / DSM 18197 / FERM 7344 / JCM 9153 / C-125) (Bacillus halodurans).